Reading from the N-terminus, the 1169-residue chain is ATP-dependent helicase/deoxyribonuclease subunit B (1169 aa).

In terms of domain architecture, UvrD-like helicase ATP-binding spans 1–285; that stretch reads MEIQFLAGRS…TIFERNHRHL (285 aa). 8 to 15 provides a ligand contact to ATP; sequence GRSGSGKT. Positions 280–586 constitute a UvrD-like helicase C-terminal domain; the sequence is RNHRHLYTPD…KFALIPPSLD (307 aa). Positions 801, 1121, 1124, and 1130 each coordinate [4Fe-4S] cluster.

It belongs to the helicase family. AddB/RexB type 1 subfamily. As to quaternary structure, heterodimer of AddA and AddB. Mg(2+) is required as a cofactor. The cofactor is [4Fe-4S] cluster.

The heterodimer acts as both an ATP-dependent DNA helicase and an ATP-dependent, dual-direction single-stranded exonuclease. Recognizes the chi site generating a DNA molecule suitable for the initiation of homologous recombination. The AddB subunit has 5' -&gt; 3' nuclease activity but not helicase activity. The sequence is that of ATP-dependent helicase/deoxyribonuclease subunit B from Bacillus pumilus (strain SAFR-032).